Reading from the N-terminus, the 283-residue chain is 4-diphosphocytidyl-2-C-methyl-D-erythritol kinase (283 aa).

Lysine 8 is an active-site residue. Residue 90–100 coordinates ATP; it reads PIGSGLAGGSS. Aspartate 132 is a catalytic residue.

This sequence belongs to the GHMP kinase family. IspE subfamily.

It carries out the reaction 4-CDP-2-C-methyl-D-erythritol + ATP = 4-CDP-2-C-methyl-D-erythritol 2-phosphate + ADP + H(+). Its pathway is isoprenoid biosynthesis; isopentenyl diphosphate biosynthesis via DXP pathway; isopentenyl diphosphate from 1-deoxy-D-xylulose 5-phosphate: step 3/6. Its function is as follows. Catalyzes the phosphorylation of the position 2 hydroxy group of 4-diphosphocytidyl-2C-methyl-D-erythritol. The sequence is that of 4-diphosphocytidyl-2-C-methyl-D-erythritol kinase from Chlamydia muridarum (strain MoPn / Nigg).